The following is a 956-amino-acid chain: Calsyntenin-3 (956 aa).

An N-terminal signal peptide occupies residues 1–19 (MTLLLLPLLLASLLASCSC). Topologically, residues 20 to 847 (NKANKHKPWI…SHRNSMIPSA (828 aa)) are extracellular. Cadherin domains are found at residues 29–145 (IEAE…APVF) and 146–246 (VERL…KPSW). N299, N327, N347, N507, and N740 each carry an N-linked (GlcNAc...) asparagine glycan. Residues 848-868 (ATLIIVVCVGFLVLMVVLGLV) traverse the membrane as a helical segment. Topologically, residues 869–956 (RIHSLHRRVS…RIIETPPHRY (88 aa)) are cytoplasmic. A disordered region spans residues 917–956 (ACVTGAVGGQQEDEDSSDSEVADSPSSDERRIIETPPHRY). The segment covering 927–937 (QEDEDSSDSEV) has biased composition (acidic residues). A compositionally biased stretch (basic and acidic residues) spans 943–956 (SDERRIIETPPHRY).

It belongs to the calsyntenin family. In terms of assembly, interacts (via cadherin domains) with both alpha and beta isoforms of neurexins (NRXN1, NRXN2 and NRXN3). Directly interacts with APBA2. Forms a tripartite complex with APBA2 and APP. Interacts with low affinity with KLC1. Interacts with SLC23A2/SVCT2. In terms of processing, proteolytically processed under normal cellular conditions. A primary zeta-cleavage generates a large extracellular (soluble) N-terminal domain (sAlc) and a short C-terminal transmembrane fragment (CTF1). A secondary cleavage catalyzed by gamma-secretase within the transmembrane domain releases the beta-Alc-beta chain in the extracellular milieu and produces an intracellular fragment (AlcICD). This processing is strongly suppressed in the tripartite complex formed with APBA2 and APP, which seems to prevent the association with gamma-secretase.

Its subcellular location is the postsynaptic cell membrane. The protein resides in the endoplasmic reticulum membrane. It localises to the golgi apparatus membrane. It is found in the cell projection. The protein localises to the dendrite. Functionally, postsynaptic adhesion molecule that binds to presynaptic neurexins to mediate both excitatory and inhibitory synapse formation. Promotes synapse development by acting as a cell adhesion molecule at the postsynaptic membrane, which associates with both neurexin-alpha and neurexin-beta proteins at the presynaptic membrane. Regulates the balance between excitatory and inhibitory synapses by inhibiting formation of excitatory parallel-fiber synapses and promoting formation of inhibitory synapses in the same neuron. May also be involved in ascorbate (vitamin C) uptake via its interaction with SLC23A2/SVCT2. Complex formation with APBA2 and APP, stabilizes APP metabolism and enhances APBA2-mediated suppression of beta-APP40 secretion, due to the retardation of intracellular APP maturation. The chain is Calsyntenin-3 (CLSTN3) from Pongo abelii (Sumatran orangutan).